The primary structure comprises 142 residues: MGASSLPPAWQLYLKDHRVSTFKNWPFLEGCACTPDRMAEAGFIHCPTENEPDLAQCFFCFKELEGWEPDDDPIEEHKKHSSGCAFLSVKKQFEELTLSEFLKLDKERAKNKIAKETNNKQKEFEETAKKVRCAIEQLAAAE.

The BIR repeat unit spans residues 18-88; it reads RVSTFKNWPF…KHSSGCAFLS (71 aa). Position 20 is a phosphoserine; by AURKC (Ser20). Lys23 bears the N6-acetyllysine mark. Thr34 is subject to Phosphothreonine; by CDK1 and CDK15. Thr48 is modified (phosphothreonine). Zn(2+) is bound by residues Cys57, Cys60, His77, and Cys84. An N6-acetyllysine mark is found at Lys90, Lys110, Lys112, and Lys115. Phosphothreonine; by AURKB is present on Thr117. Position 129 is an N6-acetyllysine (Lys129).

This sequence belongs to the IAP family. Monomer or homodimer. Exists as a homodimer in the apo state and as a monomer in the CPC-bound state. The monomer protects cells against apoptosis more efficiently than the dimer. Only the dimeric form is capable of enhancing tubulin stability in cells. When phosphorylated, interacts with LAMTOR5/HBXIP; the resulting complex binds pro-CASP9, as well as active CASP9, but much less efficiently. Component of the chromosomal passenger complex (CPC) composed of at least BIRC5/survivin, CDCA8/borealin, INCENP, AURKB or AURKC; in the complex forms a triple-helix bundle-based subcomplex with INCENP and CDCA8. Interacts with JTB. Interacts (via BIR domain) with histone H3 phosphorylated at 'Thr-3' (H3pT3). Interacts with EVI5. Interacts with GTP-bound RAN in both the S and M phases of the cell cycle. Interacts with USP9X. Interacts with tubulin. Interacts with BIRC2/c-IAP1. The acetylated form at Lys-129 interacts with STAT3. The monomeric form deacetylated at Lys-129 interacts with XPO1/CRM1. The monomeric form interacts with XIAP/BIRC4. Both the dimeric and monomeric form can interact with DIABLO/SMAC. Interacts with BIRC6/bruce. Interacts with FBXL7; this interaction facilitates the polyubiquitination and subsequent proteasomal degradation of BIRC5 by the SCF(FBXL7) E3 ubiquitin-protein ligase complex. In terms of processing, ubiquitinated by the Cul9-RING ubiquitin-protein ligase complex, leading to its degradation. Ubiquitination is required for centrosomal targeting. Deubiquitinated by USP35 or USP38; leading to stabilization. Post-translationally, acetylation at Lys-129 results in its homodimerization, while deacetylation promotes the formation of monomers which heterodimerize with XPO1/CRM1 which facilitates its nuclear export. The acetylated form represses STAT3 transactivation. The dynamic equilibrium between its acetylation and deacetylation at Lys-129 determines its interaction with XPO1/CRM1, its subsequent subcellular localization, and its ability to inhibit STAT3 transactivation. In vitro phosphorylation at Thr-117 by AURKB prevents interaction with INCENP and localization to mitotic chromosomes. Phosphorylation at Thr-48 by CK2 is critical for its mitotic and anti-apoptotic activities. Phosphorylation at Thr-34 by CDK15 is critical for its anti-apoptotic activity. Phosphorylation at Ser-20 by AURKC is critical for regulation of proper chromosome alignment and segregation, and possibly cytokinesis.

It localises to the cytoplasm. Its subcellular location is the nucleus. The protein localises to the chromosome. It is found in the centromere. The protein resides in the cytoskeleton. It localises to the spindle. Its subcellular location is the kinetochore. The protein localises to the midbody. Multitasking protein that has dual roles in promoting cell proliferation and preventing apoptosis. Component of a chromosome passage protein complex (CPC) which is essential for chromosome alignment and segregation during mitosis and cytokinesis. Acts as an important regulator of the localization of this complex; directs CPC movement to different locations from the inner centromere during prometaphase to midbody during cytokinesis and participates in the organization of the center spindle by associating with polymerized microtubules. Involved in the recruitment of CPC to centromeres during early mitosis via association with histone H3 phosphorylated at 'Thr-3' (H3pT3) during mitosis. The complex with RAN plays a role in mitotic spindle formation by serving as a physical scaffold to help deliver the RAN effector molecule TPX2 to microtubules. May counteract a default induction of apoptosis in G2/M phase. The acetylated form represses STAT3 transactivation of target gene promoters. May play a role in neoplasia. Inhibitor of CASP3 and CASP7. Essential for the maintenance of mitochondrial integrity and function. The sequence is that of Baculoviral IAP repeat-containing protein 5 (BIRC5) from Canis lupus familiaris (Dog).